A 358-amino-acid chain; its full sequence is tRNA-specific 2-thiouridylase MnmA (358 aa).

Residues 6 to 13 (ALSGGVDS) and Met32 each bind ATP. Cys103 acts as the Nucleophile in catalysis. Cys103 and Cys201 are joined by a disulfide. Residue Gly127 participates in ATP binding. Residues 151-153 (KDQ) are interaction with tRNA. Cys201 functions as the Cysteine persulfide intermediate in the catalytic mechanism.

The protein belongs to the MnmA/TRMU family.

The protein resides in the cytoplasm. It catalyses the reaction S-sulfanyl-L-cysteinyl-[protein] + uridine(34) in tRNA + AH2 + ATP = 2-thiouridine(34) in tRNA + L-cysteinyl-[protein] + A + AMP + diphosphate + H(+). Functionally, catalyzes the 2-thiolation of uridine at the wobble position (U34) of tRNA, leading to the formation of s(2)U34. The protein is tRNA-specific 2-thiouridylase MnmA of Thermotoga neapolitana (strain ATCC 49049 / DSM 4359 / NBRC 107923 / NS-E).